Here is a 126-residue protein sequence, read N- to C-terminus: S-adenosylmethionine decarboxylase proenzyme (126 aa).

Catalysis depends on S63, which acts as the Schiff-base intermediate with substrate; via pyruvic acid. Pyruvic acid (Ser); by autocatalysis is present on S63. H68 (proton acceptor; for processing activity) is an active-site residue. Catalysis depends on C83, which acts as the Proton donor; for catalytic activity.

It belongs to the prokaryotic AdoMetDC family. Type 1 subfamily. As to quaternary structure, heterotetramer of two alpha and two beta chains arranged as a dimer of alpha/beta heterodimers. Requires pyruvate as cofactor. Is synthesized initially as an inactive proenzyme. Formation of the active enzyme involves a self-maturation process in which the active site pyruvoyl group is generated from an internal serine residue via an autocatalytic post-translational modification. Two non-identical subunits are generated from the proenzyme in this reaction, and the pyruvate is formed at the N-terminus of the alpha chain, which is derived from the carboxyl end of the proenzyme. The post-translation cleavage follows an unusual pathway, termed non-hydrolytic serinolysis, in which the side chain hydroxyl group of the serine supplies its oxygen atom to form the C-terminus of the beta chain, while the remainder of the serine residue undergoes an oxidative deamination to produce ammonia and the pyruvoyl group blocking the N-terminus of the alpha chain.

The catalysed reaction is S-adenosyl-L-methionine + H(+) = S-adenosyl 3-(methylsulfanyl)propylamine + CO2. It functions in the pathway amine and polyamine biosynthesis; S-adenosylmethioninamine biosynthesis; S-adenosylmethioninamine from S-adenosyl-L-methionine: step 1/1. In terms of biological role, catalyzes the decarboxylation of S-adenosylmethionine to S-adenosylmethioninamine (dcAdoMet), the propylamine donor required for the synthesis of the polyamines spermine and spermidine from the diamine putrescine. This chain is S-adenosylmethionine decarboxylase proenzyme, found in Clostridium tetani (strain Massachusetts / E88).